A 400-amino-acid polypeptide reads, in one-letter code: Tryptophan synthase beta chain (400 aa).

Lys92 bears the N6-(pyridoxal phosphate)lysine mark.

It belongs to the TrpB family. In terms of assembly, tetramer of two alpha and two beta chains. Pyridoxal 5'-phosphate serves as cofactor.

It carries out the reaction (1S,2R)-1-C-(indol-3-yl)glycerol 3-phosphate + L-serine = D-glyceraldehyde 3-phosphate + L-tryptophan + H2O. It functions in the pathway amino-acid biosynthesis; L-tryptophan biosynthesis; L-tryptophan from chorismate: step 5/5. Its function is as follows. The beta subunit is responsible for the synthesis of L-tryptophan from indole and L-serine. The sequence is that of Tryptophan synthase beta chain from Neisseria meningitidis serogroup B (strain ATCC BAA-335 / MC58).